The sequence spans 805 residues: Pentatricopeptide repeat-containing protein At4g01570 (805 aa).

PPR repeat units lie at residues 91–125 (SATA…GVNL), 126–160 (DQTM…GDCL), 161–196 (NPSV…DNHS), 211–241 (GTVA…LKGM), 247–277 (DTWS…MKER), 288–322 (DICT…GHEP), 323–357 (DNST…GFVP), 358–392 (DTIV…GVRA), 393–427 (SCWT…GQFV), 428–462 (DAIT…GFSV), 463–497 (DLVT…NLVP), 593–627 (DVDM…GVTD), 629–663 (TSYT…FCAA), 664–698 (DIAT…GGYL), 699–733 (DIVM…GINP), and 734–768 (DVVS…GCLP).

It belongs to the PPR family. P subfamily.

In Arabidopsis thaliana (Mouse-ear cress), this protein is Pentatricopeptide repeat-containing protein At4g01570.